Consider the following 567-residue polypeptide: Urease subunit alpha (567 aa).

A Urease domain is found at 129–567 (GGVDSHIHFI…LPLAQRYFLF (439 aa)). Ni(2+) contacts are provided by histidine 134, histidine 136, and lysine 217. The residue at position 217 (lysine 217) is an N6-carboxylysine. Histidine 219 is a binding site for substrate. Histidine 246 and histidine 272 together coordinate Ni(2+). The Proton donor role is filled by histidine 320. Residue aspartate 360 participates in Ni(2+) binding.

It belongs to the metallo-dependent hydrolases superfamily. Urease alpha subunit family. Heterotrimer of UreA (gamma), UreB (beta) and UreC (alpha) subunits. Three heterotrimers associate to form the active enzyme. The cofactor is Ni cation. Carboxylation allows a single lysine to coordinate two nickel ions.

The protein resides in the cytoplasm. The enzyme catalyses urea + 2 H2O + H(+) = hydrogencarbonate + 2 NH4(+). It participates in nitrogen metabolism; urea degradation; CO(2) and NH(3) from urea (urease route): step 1/1. The protein is Urease subunit alpha of Pseudomonas putida (strain ATCC 700007 / DSM 6899 / JCM 31910 / BCRC 17059 / LMG 24140 / F1).